Consider the following 1353-residue polypeptide: Stress response protein NST1 (1353 aa).

Residues 1 to 12 are compositionally biased toward polar residues; the sequence is MSSKSQQPPTGL. Disordered stretches follow at residues 1–66, 216–422, 503–522, 531–618, 652–694, 727–882, 979–1119, 1140–1276, and 1308–1337; these read MSSK…FFNF, NANA…TQSS, NGLRPPPSGAGPFPGSVEVD, DHRA…SFGS, RRSV…AEEG, LREL…AKET, GLKS…DDAF, GSLI…GAGV, and GGTAGSGLVQGHVGGGGYSQGLFSPQHQQQ. A compositionally biased stretch (basic residues) spans 16 to 25; it reads AAKKRAKKAA. The segment covering 26–45 has biased composition (low complexity); sequence KQSQNPQPQSAPQTSSQTPA. Residues 46-59 are compositionally biased toward pro residues; sequence SVPPLPPASVPDPL. Polar residues predominate over residues 218-229; it reads NARSFPSPQQTI. A compositionally biased stretch (acidic residues) spans 242–254; that stretch reads REEEYDDEEEIEE. Over residues 268 to 277 the composition is skewed to basic residues; the sequence is KKNKKKKKKG. Pro residues predominate over residues 287–300; that stretch reads VEPPAPLPPLPPPS. Positions 317 to 330 are enriched in low complexity; sequence LPTHQPQPLSQQPP. The segment covering 331-349 has biased composition (pro residues); that stretch reads SLNPLPPPAPASAPTPTPP. The span at 368 to 388 shows a compositional bias: low complexity; the sequence is PARSARAAGKAPASAAPPHNA. Basic and acidic residues predominate over residues 531 to 541; it reads DHRAPELHDHD. Acidic residues predominate over residues 542–583; the sequence is PDDLDGEESEEYDDDDDYADDDELDDDDIGTDEADVGDEIDE. A compositionally biased stretch (basic and acidic residues) spans 654 to 665; the sequence is SVREEQNLRDMQ. Positions 666-681 are enriched in acidic residues; it reads EETDEEEEEEDDDESR. Composition is skewed to basic and acidic residues over residues 682-694, 727-750, and 760-882; these read DEPMTEKERAEEG, LRELEEEEDSKRAKEEKKAKEAQK, and QKAE…AKET. Residues 713-944 are a coiled coil; it reads AYRERVAKQR…AAQQAQRERA (232 aa). A compositionally biased stretch (polar residues) spans 1009–1021; sequence TNATPGRSMQKTP. Residues 1154 to 1165 are compositionally biased toward pro residues; it reads PTPPAPIAPPNL. Polar residues-rich tracts occupy residues 1174–1187 and 1209–1220; these read SDGQTSGPNVLRST and QPQQRRPTTSWD.

Belongs to the NST1 family.

The protein resides in the cytoplasm. Its function is as follows. May act as a negative regulator of salt tolerance. This is Stress response protein NST1 (NST1) from Cryptococcus neoformans var. neoformans serotype D (strain B-3501A) (Filobasidiella neoformans).